Here is a 211-residue protein sequence, read N- to C-terminus: Histidine biosynthesis bifunctional protein HisIE (211 aa).

The phosphoribosyl-AMP cyclohydrolase stretch occupies residues 1–107; sequence MNKLIDFSKG…FNSEIESRFK (107 aa). The tract at residues 108–211 is phosphoribosyl-ATP pyrophosphohydrolase; it reads IQALAQTIHQ…KGERKKVQEW (104 aa).

The protein in the N-terminal section; belongs to the PRA-CH family. This sequence in the C-terminal section; belongs to the PRA-PH family.

The protein resides in the cytoplasm. The catalysed reaction is 1-(5-phospho-beta-D-ribosyl)-ATP + H2O = 1-(5-phospho-beta-D-ribosyl)-5'-AMP + diphosphate + H(+). The enzyme catalyses 1-(5-phospho-beta-D-ribosyl)-5'-AMP + H2O = 1-(5-phospho-beta-D-ribosyl)-5-[(5-phospho-beta-D-ribosylamino)methylideneamino]imidazole-4-carboxamide. Its pathway is amino-acid biosynthesis; L-histidine biosynthesis; L-histidine from 5-phospho-alpha-D-ribose 1-diphosphate: step 2/9. It participates in amino-acid biosynthesis; L-histidine biosynthesis; L-histidine from 5-phospho-alpha-D-ribose 1-diphosphate: step 3/9. The polypeptide is Histidine biosynthesis bifunctional protein HisIE (Staphylococcus epidermidis (strain ATCC 12228 / FDA PCI 1200)).